Reading from the N-terminus, the 821-residue chain is Leucine--tRNA ligase (821 aa).

Residues 40 to 50 (PYPSGRIHMGH) carry the 'HIGH' region motif. The short motif at 586-590 (KMSKS) is the 'KMSKS' region element. An ATP-binding site is contributed by lysine 589.

It belongs to the class-I aminoacyl-tRNA synthetase family.

Its subcellular location is the cytoplasm. The enzyme catalyses tRNA(Leu) + L-leucine + ATP = L-leucyl-tRNA(Leu) + AMP + diphosphate. The protein is Leucine--tRNA ligase of Aliarcobacter butzleri (strain RM4018) (Arcobacter butzleri).